Consider the following 680-residue polypeptide: MIDRYKHQQLQIGLVSPQQIITWAEKILPNGEIVGEVTKPYTFHYKTNKPEKDGLFCERIFGPIKSGICACGNYRVIGNEKEDPKFCEQCGVEFVDSRVRRYQMGYIKLACPVTHVWYLKRLPSYIANLLDKPLKELEGLVYCDFSFARPVVKNPTFLRLRGSFEYEIQSWKYSIPLFFTTQGFDTFRNREISTGASAIREQLADLDLRLIIDCSLLEWKELGEEGPAGNEWEDRKMGRRKSFLVRRMELAKHFIRTNVEPERMVLCLLPVLPPELRPIIQIDGGKLMSSDINELYRRVIYRNNTLTDLLTTSRSTPGELVMCQEKLVQEAVDTLLDNGIRGQPTRDGHNKIYKSFSDVIEGKEGRFRETLLGKRVDYSGRSVIVVGPSLSLHRCGLPREIAIELFHTFVIRGLIRQHIASNIGVAKSKIREKAPIVWEILQEVMQGHPVLLNRAPTLHRLGIQAFQPILVEGRAICLHPLVCKGFNADFDGDQMAVHIPLSLEAQAEARLLMFSHMNLLSPAIGDPISVPTQDMLMGLYVLTIGNRRGICANRYNPWNHRNSQNEKIDDNNHTYTKEPYFCSSYDALGAFRQKRINLDSPLWLRWRLDQRVIAPREVPIEVQCESFGTYHEIYGHYLIVRNVNKKIFCIDIRTTVGLISFYREIEEAIQGFCRACSYST.

Residues Cys69, Cys71, Cys87, and Cys90 each coordinate Zn(2+). The Mg(2+) site is built by Asp489, Asp491, and Asp493.

Belongs to the RNA polymerase beta' chain family. RpoC1 subfamily. In plastids the minimal PEP RNA polymerase catalytic core is composed of four subunits: alpha, beta, beta', and beta''. When a (nuclear-encoded) sigma factor is associated with the core the holoenzyme is formed, which can initiate transcription. Mg(2+) serves as cofactor. It depends on Zn(2+) as a cofactor.

The protein localises to the plastid. It is found in the chloroplast. It catalyses the reaction RNA(n) + a ribonucleoside 5'-triphosphate = RNA(n+1) + diphosphate. Functionally, DNA-dependent RNA polymerase catalyzes the transcription of DNA into RNA using the four ribonucleoside triphosphates as substrates. The sequence is that of DNA-directed RNA polymerase subunit beta' from Ranunculus macranthus (Large buttercup).